The following is a 135-amino-acid chain: Inner membrane protein YgfX (135 aa).

Over 1-11 the chain is Cytoplasmic; that stretch reads MVLWQSDLRVS. Residues 1–96 form a not required to inhibit FtsZ or MreB polymerization region; that stretch reads MVLWQSDLRV…APWMIKSGMM (96 aa). The helical transmembrane segment at 12–32 threads the bilayer; sequence WRAQWLSLLIHGLVAAVILLM. Residues 33–37 are Periplasmic-facing; it reads PWPLS. A helical membrane pass occupies residues 38–54; the sequence is YTPLWMVLLSLVVFDCV. The Cytoplasmic segment spans residues 55–135; that stretch reads RSQRRINARQ…RILLQQETQR (81 aa).

As to quaternary structure, interacts with MreB and FtsZ; interaction with the latter requires FtsZ residues 33-49.

It is found in the cell inner membrane. Its function is as follows. A probable inner membrane protein. Has been shown not to be a toxin, no effects on growth are seen in LB or minimal medium up to 6 or 21 hours (respectively) after induction of expression. Interacts with cytoskeletal proteins FtsZ and MreB; inhibits FtsZ GTP-dependent polymerization as well as MreB ATP-dependent polymerization. Restores production of prodigiosin antibiotic (Pig) in Serratia strains with deletions of sdhE-ygfX; overexpression of this protein and CptB also restores Pig production to a slightly lesser extent in Serratia. The sequence is that of Inner membrane protein YgfX from Escherichia coli (strain K12).